A 198-amino-acid chain; its full sequence is Threonylcarbamoyl-AMP synthase (198 aa).

Residues 15–198 (LLKIYHIIKL…AISGQLIRRG (184 aa)) enclose the YrdC-like domain.

This sequence belongs to the SUA5 family. TsaC subfamily.

It localises to the cytoplasm. The catalysed reaction is L-threonine + hydrogencarbonate + ATP = L-threonylcarbamoyladenylate + diphosphate + H2O. Its function is as follows. Required for the formation of a threonylcarbamoyl group on adenosine at position 37 (t(6)A37) in tRNAs that read codons beginning with adenine. Catalyzes the conversion of L-threonine, HCO(3)(-)/CO(2) and ATP to give threonylcarbamoyl-AMP (TC-AMP) as the acyladenylate intermediate, with the release of diphosphate. In Baumannia cicadellinicola subsp. Homalodisca coagulata, this protein is Threonylcarbamoyl-AMP synthase.